The sequence spans 432 residues: Trigger factor (432 aa).

In terms of domain architecture, PPIase FKBP-type spans 162 to 247 (GDLVKFDYQG…VKEVQAPVLP (86 aa)).

It belongs to the FKBP-type PPIase family. Tig subfamily.

The protein resides in the cytoplasm. The enzyme catalyses [protein]-peptidylproline (omega=180) = [protein]-peptidylproline (omega=0). Functionally, involved in protein export. Acts as a chaperone by maintaining the newly synthesized protein in an open conformation. Functions as a peptidyl-prolyl cis-trans isomerase. The chain is Trigger factor from Thiobacillus denitrificans (strain ATCC 25259 / T1).